The sequence spans 298 residues: MLCREPRLYSCQRLKEAAKRQGHEMDILDPNRCLLKLSQNPPHFQIFYQENSGSKPYLLPDYDAVLPRFGTTSTQMGCSVLQHFEGKGTFCLNSSQAFLNARDKWKSLQLLLKTGVPVPNSFLSGGEVQAQATIPHISSPTILKMLNGSQGIGVILAEKPQSAVSIMEAFKQTNISMLQQDFIEEAGNADIRCFVIGDQVVATMQRIGQDGEFRANCHRGGKTEKIILSDDEKQIAIRATKAIGLDVAGVDLIRSKNGLLVLEVNASPGLEMIEKTSGVDIAAEIIDYIEINAFINLR.

Residues 108–290 form the ATP-grasp domain; that stretch reads LQLLLKTGVP…IAAEIIDYIE (183 aa). Residues lysine 144, 181–182, aspartate 190, and 214–216 contribute to the ATP site; these read DF and RAN. Mg(2+) contacts are provided by aspartate 251, glutamate 263, and asparagine 265. Mn(2+)-binding residues include aspartate 251, glutamate 263, and asparagine 265.

This sequence belongs to the RimK family. The cofactor is Mg(2+). Requires Mn(2+) as cofactor.

The protein is Probable alpha-L-glutamate ligase of Haemophilus influenzae (strain PittEE).